The chain runs to 604 residues: Protein CBFA2T2 (604 aa).

Positions 25 to 105 are disordered; that stretch reads KRVPAMPGSP…SSTSSALTNQ (81 aa). Phosphoserine is present on S33. A Glycyl lysine isopeptide (Lys-Gly) (interchain with G-Cter in SUMO2) cross-link involves residue K38. Residues 46-59 show a composition bias toward pro residues; it reads PTMPPLPPINPGGP. 2 stretches are compositionally biased toward polar residues: residues 64–79 and 88–105; these read FTPT…SPPT and QRFS…LTNQ. Residues 107-215 are interaction with PRDM14; it reads LPATCGARQL…QHEHLLLNTS (109 aa). The TAFH domain maps to 113 to 208; sequence ARQLSKLKRF…TPSQYLAQHE (96 aa). Positions 229–265 are disordered; that stretch reads VHGNGKRPSPERREENSFDRDTIAPEPPAKRVCTISP. The span at 236-251 shows a compositional bias: basic and acidic residues; that stretch reads PSPERREENSFDRDTI. S264 carries the phosphoserine modification. The tract at residues 331-377 is nervy homology region 2 (NHR2); the sequence is QDELVDHRLTEREWADEWKHLDHALNCIMEMVEKTRRSMAVLRRCQE. The disordered stretch occupies residues 397–427; the sequence is RKTGTELVSRQHSPGSADSLSNDSQREFNSR. Positions 402-419 are enriched in polar residues; that stretch reads ELVSRQHSPGSADSLSND. S409 is modified (phosphoserine). Residues 435 to 484 are nervy homology region 3 (NHR3); that stretch reads VEFWKKTEEAVNKVKIQAMSEVQKAVAEAEQKAFEVIATERARMEQTIAD. A Glycyl lysine isopeptide (Lys-Gly) (interchain with G-Cter in SUMO2) cross-link involves residue K449. The stretch at 451 to 491 forms a coiled coil; that stretch reads QAMSEVQKAVAEAEQKAFEVIATERARMEQTIADVKRQAAE. The Zn(2+) site is built by C507, C510, C518, C521, C527, C531, H539, and C543. Residues 507–543 form an MYND-type zinc finger; it reads CWNCGRKASETCSGCNIARYCGSFCQHKDWERHHRLC. Positions 547-604 are disordered; the sequence is LHGQSPHGQGRPLLPVGRGSSARSADCSVPSPALDKTSATTSRSSTPASVTAIDTNGL. At S577 the chain carries Phosphoserine. The span at 583 to 598 shows a compositional bias: low complexity; sequence TSATTSRSSTPASVTA.

The protein belongs to the CBFA2T family. As to quaternary structure, homooligomer. Homotetramerization is mediated by nervy homology region 2. Can interact with RUNX1T1/CBFA2T1 and CBFA2T3/MTG16; heterotetramerization between members of the CBFA2T family is proposed. Forms a heterooligomer with the AML1-MTG8/ETO fusion protein. Interacts with PRDM14. Interacts with RBPJ, GFI1, TCF4. Interacts with TAL1 and CBFA2T3/MTG16; the heteromer with CBFA2T3/MTG16 may function in repression of TAL1. As to expression, ubiquitously expressed in fetal and adult tissues. Highly expressed in adult brain, heart, lung, kidney, lymph node, appendix, thymus, testis, uterus, small intestine, prostate and thymus.

Its subcellular location is the nucleus. Its function is as follows. Transcriptional corepressor which facilitates transcriptional repression via its association with DNA-binding transcription factors and recruitment of other corepressors and histone-modifying enzymes. Via association with PRDM14 is involved in regulation of embryonic stem cell (ESC) pluripotency. Involved in primordial germ cell (PCG) formation. Stabilizes PRDM14 and OCT4 on chromatin in a homooligomerization-dependent manner. Can repress the expression of MMP7 in a ZBTB33-dependent manner. May function as a complex with the chimeric protein RUNX1/AML1-CBFA2T1/MTG8 (AML1-MTG8/ETO fusion protein) which is produced in acute myeloid leukemia with the chromosomal translocation t(8;21). May thus be involved in the repression of AML1-dependent transcription and the induction of G-CSF/CSF3-dependent cell growth. May be a tumor suppressor gene candidate involved in myeloid tumors with the deletion of the 20q11 region. Through heteromerization with CBFA2T3/MTG16 may be involved in regulation of the proliferation and the differentiation of erythroid progenitors by repressing the expression of TAL1 target genes. Required for the maintenance of the secretory cell lineage in the small intestine. Can inhibit Notch signaling probably by association with RBPJ and may be involved in GFI1-mediated Paneth cell differentiation. The polypeptide is Protein CBFA2T2 (CBFA2T2) (Homo sapiens (Human)).